The sequence spans 939 residues: Nonsense-mediated mRNA decay factor SMG8 (939 aa).

2 disordered regions span residues 561–600 (KICT…QLSP) and 617–645 (LNES…ADTE). Positions 567–587 (GEDENEDGETEEADEDTEEKE) are enriched in acidic residues. Positions 617–629 (LNESQESSEQLSG) are enriched in low complexity.

The protein belongs to the SMG8 family.

Functionally, involved in nonsense-mediated decay (NMD) of mRNAs containing premature stop codons. Probable component of kinase complex containing nonC and recruited to stalled ribosomes. The polypeptide is Nonsense-mediated mRNA decay factor SMG8 (Drosophila ananassae (Fruit fly)).